Here is a 759-residue protein sequence, read N- to C-terminus: 5-methyltetrahydropteroyltriglutamate--homocysteine methyltransferase (759 aa).

Positions 1–16 are enriched in polar residues; that stretch reads MTQPVRRQPFTATITG. The interval 1–22 is disordered; sequence MTQPVRRQPFTATITGSPRIGP. 5-methyltetrahydropteroyltri-L-glutamate contacts are provided by residues 24 to 27 and lysine 118; that span reads RELK. Residues 437–439 and glutamate 490 contribute to the L-homocysteine site; that span reads IGS. L-methionine contacts are provided by residues 437-439 and glutamate 490; that span reads IGS. Residues 521–522 and tryptophan 567 each bind 5-methyltetrahydropteroyltri-L-glutamate; that span reads RC. Residue aspartate 605 participates in L-homocysteine binding. Residue aspartate 605 coordinates L-methionine. Residue glutamate 611 coordinates 5-methyltetrahydropteroyltri-L-glutamate. Zn(2+) contacts are provided by histidine 647, cysteine 649, and glutamate 671. Histidine 700 acts as the Proton donor in catalysis. Residue cysteine 732 participates in Zn(2+) binding.

The protein belongs to the vitamin-B12 independent methionine synthase family. Zn(2+) is required as a cofactor.

The catalysed reaction is 5-methyltetrahydropteroyltri-L-glutamate + L-homocysteine = tetrahydropteroyltri-L-glutamate + L-methionine. It participates in amino-acid biosynthesis; L-methionine biosynthesis via de novo pathway; L-methionine from L-homocysteine (MetE route): step 1/1. Functionally, catalyzes the transfer of a methyl group from 5-methyltetrahydrofolate to homocysteine resulting in methionine formation. The sequence is that of 5-methyltetrahydropteroyltriglutamate--homocysteine methyltransferase from Mycobacterium tuberculosis (strain ATCC 25177 / H37Ra).